We begin with the raw amino-acid sequence, 283 residues long: Pantothenate synthetase (283 aa).

Residue 31–38 (MGALHDGH) participates in ATP binding. The active-site Proton donor is the H38. Residue Q62 coordinates (R)-pantoate. Position 62 (Q62) interacts with beta-alanine. Residue 148 to 151 (GKKD) participates in ATP binding. Q154 contributes to the (R)-pantoate binding site. ATP is bound by residues V177 and 185–188 (KSSR).

The protein belongs to the pantothenate synthetase family. In terms of assembly, homodimer.

The protein localises to the cytoplasm. The catalysed reaction is (R)-pantoate + beta-alanine + ATP = (R)-pantothenate + AMP + diphosphate + H(+). It participates in cofactor biosynthesis; (R)-pantothenate biosynthesis; (R)-pantothenate from (R)-pantoate and beta-alanine: step 1/1. Functionally, catalyzes the condensation of pantoate with beta-alanine in an ATP-dependent reaction via a pantoyl-adenylate intermediate. This is Pantothenate synthetase from Staphylococcus aureus (strain MRSA252).